A 92-amino-acid chain; its full sequence is Probable Fe(2+)-trafficking protein (92 aa).

This sequence belongs to the Fe(2+)-trafficking protein family.

Its function is as follows. Could be a mediator in iron transactions between iron acquisition and iron-requiring processes, such as synthesis and/or repair of Fe-S clusters in biosynthetic enzymes. The polypeptide is Probable Fe(2+)-trafficking protein (Xanthomonas campestris pv. campestris (strain 8004)).